The primary structure comprises 313 residues: Curved DNA-binding protein (313 aa).

Positions 5 to 69 (DYYKILGVSR…EKRKAYDAIG (65 aa)) constitute a J domain. The disordered stretch occupies residues 71–93 (GWKQGQGFTPPPGWESRPGGEGV).

Its subcellular location is the cytoplasm. It is found in the nucleoid. Functionally, DNA-binding protein that preferentially recognizes a curved DNA sequence. It is probably a functional analog of DnaJ; displays overlapping activities with DnaJ, but functions under different conditions, probably acting as a molecular chaperone in an adaptive response to environmental stresses other than heat shock. Lacks autonomous chaperone activity; binds native substrates and targets them for recognition by DnaK. Its activity is inhibited by the binding of CbpM. The polypeptide is Curved DNA-binding protein (Coxiella burnetii (strain Dugway 5J108-111)).